Consider the following 574-residue polypeptide: MRAFQRYGLEHIVLCPGSRSAPLALAVGALIEESGINAYTAIDERSAAFMAIGISAASGKATIVITTSGTAVSNLLPAAVEADRSCLPIIFITADRPLRLKGCGSNQTVNQEDFLVPVCREVFNCPSIGLHEISGRSFFTLVKKTWEKAHAYPGPVHLNIPIEEPLHASFLEQKEVCNGWKPLNFEEIQLPISTVSTNTRIKTKEVPELDPSQPGIILAGPWRGKPSQLLGFRKAVKEFQSFTGWPLFADCLSAITIKQSGLISFWELLISAQIFESNDKLQVLRLGPLSCSRALESFLRNTNKKQVLITEGEERYLDPLHLAKQYSGGLQSWLKIFKSNYPNLNNNLVNDDTNILEDLLNKNQLVGDLVDKYLKEDSKITEPSIARKLLDLIPEDIPIMLSASSPVRDFLAYSGFSPFKRRLYSFRGASGIDGNLSLAIGLSIFLGPLVVVCGDLAFLHDSNALLLNQPKKYPLIILLIDNNGGGIFKQLSLAPIFKGSVDKLFSMPQSINIGDLAKAHNIPFRTISSFDELNSALEWSLKLSGPVIIRACTNSEEDTLLRKNITDGLKKYIN.

Belongs to the TPP enzyme family. MenD subfamily. Homodimer. It depends on Mg(2+) as a cofactor. The cofactor is Mn(2+). Requires thiamine diphosphate as cofactor.

It carries out the reaction isochorismate + 2-oxoglutarate + H(+) = 5-enolpyruvoyl-6-hydroxy-2-succinyl-cyclohex-3-ene-1-carboxylate + CO2. It participates in quinol/quinone metabolism; 1,4-dihydroxy-2-naphthoate biosynthesis; 1,4-dihydroxy-2-naphthoate from chorismate: step 2/7. The protein operates within cofactor biosynthesis; phylloquinone biosynthesis. In terms of biological role, catalyzes the thiamine diphosphate-dependent decarboxylation of 2-oxoglutarate and the subsequent addition of the resulting succinic semialdehyde-thiamine pyrophosphate anion to isochorismate to yield 2-succinyl-5-enolpyruvyl-6-hydroxy-3-cyclohexene-1-carboxylate (SEPHCHC). The protein is 2-succinyl-5-enolpyruvyl-6-hydroxy-3-cyclohexene-1-carboxylate synthase of Prochlorococcus marinus (strain SARG / CCMP1375 / SS120).